The sequence spans 87 residues: Small ribosomal subunit protein bS16 (87 aa).

Belongs to the bacterial ribosomal protein bS16 family.

The chain is Small ribosomal subunit protein bS16 from Psychrobacter sp. (strain PRwf-1).